The primary structure comprises 415 residues: Dynein assembly factor with WD repeat domains 1 (415 aa).

WD repeat units follow at residues 90 to 129 (AHILPLTNVALNKSGSCFITGSYDRTCKLWDTASGEELNT), 132 to 174 (GHRN…HTFR), 175 to 214 (GHTAEIVCLSFNPQSTLVATGSMDTTAKLWDIQNGEEVYT), 217 to 256 (GHSAEIISLSFNTSGDRIITGSFDHTVVVWDADTGRKVNI), 259 to 298 (GHCAEISSASFNWDCSLILTGSMDKTCKLWDATNGKCVAT), 301 to 340 (GHDDEILDSCFDYTGKLIATASADGTARIFSAATRKCIAK), 343 to 384 (GHEG…QVLE), and 386 to 415 (HTDEIFSCAFNYKGNIVITGSKDNTCRIWR).

The protein belongs to the WD repeat WDR69 family. As to quaternary structure, interacts with IFT46.

It is found in the cytoplasm. Its subcellular location is the cytoskeleton. The protein localises to the flagellum basal body. It localises to the flagellum axoneme. Functionally, required for axonemal dynein assembly and ciliary motility in ciliated organs, including Kupffer's vesicle, during embryogenesis. Facilitates the onset of robust cilia motility during development. In Homo sapiens (Human), this protein is Dynein assembly factor with WD repeat domains 1.